We begin with the raw amino-acid sequence, 815 residues long: Phenylalanine--tRNA ligase beta subunit (815 aa).

The tRNA-binding domain occupies 39-153; sequence ASHAQGVVVG…NVPDLGQPVG (115 aa). The region spanning 414 to 498 is the B5 domain; it reads KSAEPVKLRR…RLVGFDRFEA (85 aa). Mg(2+) contacts are provided by Asp-476, Asp-482, Glu-485, and Glu-486. The FDX-ACB domain occupies 721–814; it reads PTVPAMELDL…LVKQFSAELR (94 aa).

Belongs to the phenylalanyl-tRNA synthetase beta subunit family. Type 1 subfamily. Tetramer of two alpha and two beta subunits. The cofactor is Mg(2+).

It is found in the cytoplasm. It catalyses the reaction tRNA(Phe) + L-phenylalanine + ATP = L-phenylalanyl-tRNA(Phe) + AMP + diphosphate + H(+). The protein is Phenylalanine--tRNA ligase beta subunit of Prochlorococcus marinus (strain MIT 9313).